The chain runs to 483 residues: Arginine/agmatine antiporter (483 aa).

12 consecutive transmembrane segments (helical) span residues 11–31, 41–61, 85–105, 124–144, 157–177, 208–228, 239–259, 289–309, 336–356, 364–384, 415–435, and 458–478; these read ILGT…GGIF, ASAG…FFIA, GFGP…QIFG, YFAG…IWIF, FVNI…ILIT, STML…VISG, ATIL…LLPF, VLMN…WTIL, PSFS…LVYF, MLEI…LFLV, LWLI…LLAL, and EILK…LFSA.

It belongs to the amino acid-polyamine-organocation (APC) superfamily. Basic amino acid/polyamine antiporter (APA) (TC 2.A.3.2) family.

Its subcellular location is the cell inner membrane. Functionally, catalyzes the exchange of L-arginine for agmatine. The arginine uptake by the bacterium in the macrophage may be a virulence factor against the host innate immune response. In Chlamydia trachomatis serovar A (strain ATCC VR-571B / DSM 19440 / HAR-13), this protein is Arginine/agmatine antiporter (aaxC).